The following is a 228-amino-acid chain: UPF0173 metal-dependent hydrolase BcerKBAB4_4442 (228 aa).

It belongs to the UPF0173 family.

The chain is UPF0173 metal-dependent hydrolase BcerKBAB4_4442 from Bacillus mycoides (strain KBAB4) (Bacillus weihenstephanensis).